We begin with the raw amino-acid sequence, 272 residues long: 3-methyl-2-oxobutanoate hydroxymethyltransferase (272 aa).

Residues Asp43 and Asp82 each contribute to the Mg(2+) site. Residues 43–44 (DS), Asp82, and Lys112 contribute to the 3-methyl-2-oxobutanoate site. Glu114 is a Mg(2+) binding site. The active-site Proton acceptor is the Glu179.

The protein belongs to the PanB family. In terms of assembly, homodecamer; pentamer of dimers. Mg(2+) is required as a cofactor.

Its subcellular location is the cytoplasm. It carries out the reaction 3-methyl-2-oxobutanoate + (6R)-5,10-methylene-5,6,7,8-tetrahydrofolate + H2O = 2-dehydropantoate + (6S)-5,6,7,8-tetrahydrofolate. Its pathway is cofactor biosynthesis; (R)-pantothenate biosynthesis; (R)-pantoate from 3-methyl-2-oxobutanoate: step 1/2. Its function is as follows. Catalyzes the reversible reaction in which hydroxymethyl group from 5,10-methylenetetrahydrofolate is transferred onto alpha-ketoisovalerate to form ketopantoate. The protein is 3-methyl-2-oxobutanoate hydroxymethyltransferase of Staphylococcus epidermidis (strain ATCC 35984 / DSM 28319 / BCRC 17069 / CCUG 31568 / BM 3577 / RP62A).